The primary structure comprises 84 residues: Sec-independent protein translocase protein TatA (84 aa).

Residues 1–21 (MPNLGVPELLIIALVIFLLFG) traverse the membrane as a helical segment. The segment covering 42 to 57 (EMDEMKTDGDKKELAE) has biased composition (basic and acidic residues). Residues 42 to 84 (EMDEMKTDGDKKELAEKQAPTAEQQQAQDLAQPKSEQPNEHNA) are disordered. Residues 62–77 (TAEQQQAQDLAQPKSE) are compositionally biased toward polar residues.

The protein belongs to the TatA/E family. The Tat system comprises two distinct complexes: a TatABC complex, containing multiple copies of TatA, TatB and TatC subunits, and a separate TatA complex, containing only TatA subunits. Substrates initially bind to the TatABC complex, which probably triggers association of the separate TatA complex to form the active translocon.

The protein localises to the cell membrane. Its function is as follows. Part of the twin-arginine translocation (Tat) system that transports large folded proteins containing a characteristic twin-arginine motif in their signal peptide across membranes. TatA could form the protein-conducting channel of the Tat system. The protein is Sec-independent protein translocase protein TatA of Corynebacterium jeikeium (strain K411).